A 301-amino-acid chain; its full sequence is Tetrapeptide repeat homeobox protein 2 (301 aa).

2 disordered regions span residues 1 to 27 (MQDP…RTVY) and 273 to 301 (SLST…LLDL). Composition is skewed to basic and acidic residues over residues 16-26 (PPRRQRQERTV) and 281-292 (YKEEDGFVDKNH). The segment at residues 20 to 79 (QRQERTVYTESQQKVLEFYFQKDQYPNYDQRLNLAEMLSLREQQLQVWFKNRRAKLARER) is a DNA-binding region (homeobox).

The protein belongs to the paired homeobox family.

Its subcellular location is the nucleus. Functionally, transcription factor expressed after fertilization required for zygotic genome activation (ZGA), a critical event in early embryonic development during which the developmental control passes from maternally provided mRNAs to the expression of the zygotic genome after fertilization. Binds and activates expression of key ZGA marker genes, such as NANOGNB, ZSCAN4, DUXB, KLF5 and DPPA3. Binds to regulatory DNA sequences containing a 5'-TAATCC-3' sequence motif. In Homo sapiens (Human), this protein is Tetrapeptide repeat homeobox protein 2.